A 361-amino-acid polypeptide reads, in one-letter code: Alanine racemase (361 aa).

Lys34 serves as the catalytic Proton acceptor; specific for D-alanine. Lys34 is modified (N6-(pyridoxal phosphate)lysine). Arg129 is a substrate binding site. Tyr254 functions as the Proton acceptor; specific for L-alanine in the catalytic mechanism. Met302 contributes to the substrate binding site.

The protein belongs to the alanine racemase family. Pyridoxal 5'-phosphate serves as cofactor.

The catalysed reaction is L-alanine = D-alanine. It carries out the reaction L-serine = D-serine. The protein operates within amino-acid biosynthesis; D-alanine biosynthesis; D-alanine from L-alanine: step 1/1. In terms of biological role, catalyzes the interconversion of L-alanine and D-alanine. Likely plays an important role in supplying D-alanine, which is an indispensable constituent in the biosynthesis of bacterial cell-wall peptidoglycan. To a lesser extent, is also able to racemize L-serine and D-serine. Does not act on other proteinogenic amino-acids. This chain is Alanine racemase (alr1), found in Vibrio cholerae serotype O1 (strain ATCC 39315 / El Tor Inaba N16961).